The chain runs to 657 residues: Threonine--tRNA ligase (657 aa).

In terms of domain architecture, TGS spans 7 to 70 (DRQQVIITLP…TENARVSIIT (64 aa)). Positions 253–555 (DHRKLGAELG…LIEHTAGNFP (303 aa)) are catalytic. 3 residues coordinate Zn(2+): Cys351, His402, and His532.

The protein belongs to the class-II aminoacyl-tRNA synthetase family. In terms of assembly, homodimer. It depends on Zn(2+) as a cofactor.

Its subcellular location is the cytoplasm. It catalyses the reaction tRNA(Thr) + L-threonine + ATP = L-threonyl-tRNA(Thr) + AMP + diphosphate + H(+). In terms of biological role, catalyzes the attachment of threonine to tRNA(Thr) in a two-step reaction: L-threonine is first activated by ATP to form Thr-AMP and then transferred to the acceptor end of tRNA(Thr). Also edits incorrectly charged L-seryl-tRNA(Thr). The sequence is that of Threonine--tRNA ligase from Chlorobaculum tepidum (strain ATCC 49652 / DSM 12025 / NBRC 103806 / TLS) (Chlorobium tepidum).